The sequence spans 237 residues: Leucyl/phenylalanyl-tRNA--protein transferase (237 aa).

It belongs to the L/F-transferase family.

The protein resides in the cytoplasm. The catalysed reaction is N-terminal L-lysyl-[protein] + L-leucyl-tRNA(Leu) = N-terminal L-leucyl-L-lysyl-[protein] + tRNA(Leu) + H(+). The enzyme catalyses N-terminal L-arginyl-[protein] + L-leucyl-tRNA(Leu) = N-terminal L-leucyl-L-arginyl-[protein] + tRNA(Leu) + H(+). It catalyses the reaction L-phenylalanyl-tRNA(Phe) + an N-terminal L-alpha-aminoacyl-[protein] = an N-terminal L-phenylalanyl-L-alpha-aminoacyl-[protein] + tRNA(Phe). Its function is as follows. Functions in the N-end rule pathway of protein degradation where it conjugates Leu, Phe and, less efficiently, Met from aminoacyl-tRNAs to the N-termini of proteins containing an N-terminal arginine or lysine. This Shewanella baltica (strain OS155 / ATCC BAA-1091) protein is Leucyl/phenylalanyl-tRNA--protein transferase.